We begin with the raw amino-acid sequence, 858 residues long: Elongation factor 2b (858 aa).

A tr-type G domain is found at 17-362; it reads SNIRNMSVIA…MITIHLPSPV (346 aa). Residues 26–33, 158–161, and 216–218 each bind GTP; these read AHVDHGKS, NKMD, and SGL. His-715 is modified (diphthamide).

The protein belongs to the TRAFAC class translation factor GTPase superfamily. Classic translation factor GTPase family. EF-G/EF-2 subfamily. In terms of assembly, binds to 80S ribosomes. Actively translating ribosomes show mutually exclusive binding of eIF5a (EIF5A or EIF5A2) and EEF2/eEF2. Interacts with serbp1; interaction sequesters eef2/eEF2 at the A-site of the ribosome, thereby blocking the interaction sites of the mRNA-tRNA complex, promoting ribosome stabilization and hibernation. Interacts with habp4; interaction takes place at the A-site of hibernating ribosomes and promotes ribosome stabilization.

Its subcellular location is the cytoplasm. It localises to the nucleus. It carries out the reaction GTP + H2O = GDP + phosphate + H(+). Catalyzes the GTP-dependent ribosomal translocation step during translation elongation. During this step, the ribosome changes from the pre-translocational (PRE) to the post-translocational (POST) state as the newly formed A-site-bound peptidyl-tRNA and P-site-bound deacylated tRNA move to the P and E sites, respectively. Catalyzes the coordinated movement of the two tRNA molecules, the mRNA and conformational changes in the ribosome. The protein is Elongation factor 2b of Danio rerio (Zebrafish).